Here is a 311-residue protein sequence, read N- to C-terminus: Putative tenascin-XA (311 aa).

2 disordered regions span residues 1-47 and 124-150; these read MEDK…EPRL and LSAEGTTGLAPAGQTSEESRPRLSQLS. Fibronectin type-III domains lie at 41–135, 145–249, and 250–311; these read PPEE…LAPA, RLSQ…SPRD, and LQFS…SCVH.

As to expression, expressed in the adrenal gland.

The polypeptide is Putative tenascin-XA (TNXA) (Homo sapiens (Human)).